Here is a 356-residue protein sequence, read N- to C-terminus: UDP-N-acetylglucosamine--N-acetylmuramyl-(pentapeptide) pyrophosphoryl-undecaprenol N-acetylglucosamine transferase (356 aa).

Residues 12–14 (TGG), asparagine 124, arginine 163, serine 188, isoleucine 242, and glutamine 287 each bind UDP-N-acetyl-alpha-D-glucosamine.

It belongs to the glycosyltransferase 28 family. MurG subfamily.

Its subcellular location is the cell inner membrane. It carries out the reaction di-trans,octa-cis-undecaprenyl diphospho-N-acetyl-alpha-D-muramoyl-L-alanyl-D-glutamyl-meso-2,6-diaminopimeloyl-D-alanyl-D-alanine + UDP-N-acetyl-alpha-D-glucosamine = di-trans,octa-cis-undecaprenyl diphospho-[N-acetyl-alpha-D-glucosaminyl-(1-&gt;4)]-N-acetyl-alpha-D-muramoyl-L-alanyl-D-glutamyl-meso-2,6-diaminopimeloyl-D-alanyl-D-alanine + UDP + H(+). It functions in the pathway cell wall biogenesis; peptidoglycan biosynthesis. Cell wall formation. Catalyzes the transfer of a GlcNAc subunit on undecaprenyl-pyrophosphoryl-MurNAc-pentapeptide (lipid intermediate I) to form undecaprenyl-pyrophosphoryl-MurNAc-(pentapeptide)GlcNAc (lipid intermediate II). The sequence is that of UDP-N-acetylglucosamine--N-acetylmuramyl-(pentapeptide) pyrophosphoryl-undecaprenol N-acetylglucosamine transferase from Pseudomonas syringae pv. syringae (strain B728a).